An 83-amino-acid chain; its full sequence is MSGPNGDLGTPVEAGAEGEEDGFGEAEYAAINSMLDQINSCLDHLEEKNDHLHARLQELLESNRQTRLEFQQQLGETPSDASP.

Positions 1–25 (MSGPNGDLGTPVEAGAEGEEDGFGE) are disordered. A coiled-coil region spans residues 25-74 (EAEYAAINSMLDQINSCLDHLEEKNDHLHARLQELLESNRQTRLEFQQQL). S82 is modified (phosphoserine).

This sequence belongs to the UPF0184 (EST00098) family.

It is found in the cell junction. The protein localises to the cytoplasm. Its subcellular location is the cytoskeleton. Essential for intermediate filament organization in intestinal cells, interacts with intermediate filament and regulates intestinal lumen morphology. This Bos taurus (Bovine) protein is Bublin coiled-coil protein (BBLN).